A 366-amino-acid chain; its full sequence is Ribosomal RNA large subunit methyltransferase M (366 aa).

Residues serine 188, 221–224 (CPGG), aspartate 240, aspartate 260, and aspartate 277 contribute to the S-adenosyl-L-methionine site. Catalysis depends on lysine 306, which acts as the Proton acceptor.

It belongs to the class I-like SAM-binding methyltransferase superfamily. RNA methyltransferase RlmE family. RlmM subfamily. In terms of assembly, monomer.

It localises to the cytoplasm. The enzyme catalyses cytidine(2498) in 23S rRNA + S-adenosyl-L-methionine = 2'-O-methylcytidine(2498) in 23S rRNA + S-adenosyl-L-homocysteine + H(+). Functionally, catalyzes the 2'-O-methylation at nucleotide C2498 in 23S rRNA. The polypeptide is Ribosomal RNA large subunit methyltransferase M (Escherichia coli O139:H28 (strain E24377A / ETEC)).